Consider the following 298-residue polypeptide: MVRMVPVLLSLLLLLGPAVPQENQDGRYSLTYIYTGLSKHVEDVPAFQALGSLNDLQFFRYNSKDRKSQPMGLWRQVEGMEDWKQDSQLQKAREDIFMETLKDIVEYYNDSNGSHVLQGRFGCEIENNRSSGAFWKYYYDGKDYIEFNKEIPAWVPFDPAAQITKQKWEAEPVYVQRAKAYLEEECPATLRKYLKYSKNILDRQDPPSVVVTSHQAPGEKKKLKCLAYDFYPGKIDVHWTRAGEVQEPELRGDVLHNGNGTYQSWVVVAVPPQDTAPYSCHVQHSSLAQPLVVPWEAS.

Positions 1–20 (MVRMVPVLLSLLLLLGPAVP) are cleaved as a signal peptide. At Gln21 the chain carries Pyrrolidone carboxylic acid. Asn109 carries an N-linked (GlcNAc...) (complex) asparagine glycan. Asn112 is a glycosylation site (N-linked (GlcNAc...) asparagine). Intrachain disulfides connect Cys123–Cys186 and Cys225–Cys280. N-linked (GlcNAc...) (complex) asparagine glycosylation is present at Asn128. The region spanning 207 to 292 (PSVVVTSHQA…QHSSLAQPLV (86 aa)) is the Ig-like C1-type domain. N-linked (GlcNAc...) asparagine glycosylation occurs at Asn259.

The protein belongs to the MHC class I family. In terms of assembly, interacts with PIP. In terms of processing, N-glycosylated. N-glycan at Asn-128: Hex5HexNAc4. Blood plasma, seminal plasma, urine, saliva, sweat, epithelial cells of various human glands, liver.

It is found in the secreted. Functionally, stimulates lipid degradation in adipocytes and causes the extensive fat losses associated with some advanced cancers. May bind polyunsaturated fatty acids. The sequence is that of Zinc-alpha-2-glycoprotein (AZGP1) from Homo sapiens (Human).